The sequence spans 360 residues: MRAVTWAIVAMLLPRVLGAIPTRTPRTGGVGDTLSVAIVCHDLESVEVTWGPGSAHHGLSANLSLEFRYGNQVPQPCPHYFLLDSVRAGCVLPMGKGLLEVVLREGGGAKLFSRKKKASAWLRPRPPWNVTLSWVGDTVAVSCPSHSYPGLEYEVQHRDDFDPEWQSTSAPFCNLTVGGLDPGRCYDFRVRATPQDFYYGPEARPSKWTGVASLQGVGPTGSCTGPTLPRTPGTPTPPLALACGLAVALLTLVLLLALLRMRRVKEALLPGVPDPRGSFPGLFEKHHGNFQAWIADSQAAVPTVPEQDKDDDVIRPQTKGVETQEDDDVIAPGSPCLGGGALMSVGGASFLMGDSGYTTL.

Positions 1–18 (MRAVTWAIVAMLLPRVLG) are cleaved as a signal peptide. Residues 27–238 (TGGVGDTLSV…PRTPGTPTPP (212 aa)) are Extracellular-facing. N-linked (GlcNAc...) asparagine glycosylation occurs at N62. A disulfide bridge links C77 with C90. Residues 123 to 214 (RPRPPWNVTL…PSKWTGVASL (92 aa)) form the Fibronectin type-III domain. Residues N129 and N174 are each glycosylated (N-linked (GlcNAc...) asparagine). Cysteines 185 and 223 form a disulfide. The WSXWS motif motif lies at 205–209 (PSKWT). Residues 239–259 (LALACGLAVALLTLVLLLALL) traverse the membrane as a helical segment. At 260-360 (RMRRVKEALL…LMGDSGYTTL (101 aa)) the chain is on the cytoplasmic side. The Box 1 motif signature appears at 268–276 (LLPGVPDPR).

Belongs to the type I cytokine receptor family. Type 5 subfamily. In terms of assembly, heterodimer of CRLF2 and IL7R. In terms of tissue distribution, expressed in all tissues examined including brain, thymus, lung, heart, muscle, stomach, small intestine, liver, kidney, spleen, testis and skin. Highest levels in thymus, liver and testis.

The protein localises to the membrane. Its function is as follows. Receptor for thymic stromal lymphopoietin (TSLP). Forms a functional complex with TSLP and IL7R which is capable of stimulating cell proliferation through activation of STAT3 and STAT5. Also activates JAK2. Implicated in the development of the hematopoietic system. This Rattus norvegicus (Rat) protein is Cytokine receptor-like factor 2 (Crlf2).